The chain runs to 424 residues: Double homeobox protein 4-like protein 2 (424 aa).

Polar residues predominate over residues 1–10 (MALPTPSDST). 5 disordered regions span residues 1 to 24 (MALPTPSDSTLPAEARGRGRRRRL), 72 to 102 (SRQLRQHRRESRPWPGRRGPPEGRRKRTAVT), 148 to 167 (RHPGQGGRAPAQAGGLCSAA), 218 to 362 (LQPS…LQEP), and 388 to 414 (QPLLETEAPGELEASEEAASLEAPLSE). DNA-binding regions (homeobox) lie at residues 19-78 (GRRR…LRQH) and 94-153 (GRRK…PGQG). Over residues 265–274 (KSREDRDPQR) the composition is skewed to basic and acidic residues. Composition is skewed to low complexity over residues 278–302 (PGPCAVAQPGPAQAGPQGQGVLAPP) and 319–329 (AGAAWEPQAGA).

The protein localises to the nucleus. Functionally, may be involved in transcriptional regulation. This is Double homeobox protein 4-like protein 2 (DUX4L2) from Homo sapiens (Human).